The chain runs to 466 residues: Ribulose bisphosphate carboxylase large chain (466 aa).

At K5 the chain carries N6,N6,N6-trimethyllysine. Residues N114 and T164 each coordinate substrate. The active-site Proton acceptor is K166. Residue K168 coordinates substrate. K192, D194, and E195 together coordinate Mg(2+). K192 carries the N6-carboxylysine modification. The Proton acceptor role is filled by H285. R286, H318, and S370 together coordinate substrate.

This sequence belongs to the RuBisCO large chain family. Type I subfamily. Heterohexadecamer of 8 large chains and 8 small chains; disulfide-linked. The disulfide link is formed within the large subunit homodimers. Mg(2+) serves as cofactor. Post-translationally, the disulfide bond which can form in the large chain dimeric partners within the hexadecamer appears to be associated with oxidative stress and protein turnover.

Its subcellular location is the plastid. The protein resides in the chloroplast. It catalyses the reaction 2 (2R)-3-phosphoglycerate + 2 H(+) = D-ribulose 1,5-bisphosphate + CO2 + H2O. It carries out the reaction D-ribulose 1,5-bisphosphate + O2 = 2-phosphoglycolate + (2R)-3-phosphoglycerate + 2 H(+). Functionally, ruBisCO catalyzes two reactions: the carboxylation of D-ribulose 1,5-bisphosphate, the primary event in carbon dioxide fixation, as well as the oxidative fragmentation of the pentose substrate in the photorespiration process. Both reactions occur simultaneously and in competition at the same active site. This Thespesia populnea (Portia tree) protein is Ribulose bisphosphate carboxylase large chain.